The sequence spans 285 residues: ATP synthase subunit a (285 aa).

6 helical membrane passes run 41 to 61 (TWHV…LWIF), 102 to 122 (IAPL…MDLI), 164 to 184 (LGVF…GGFI), 197 to 217 (VFVQ…ALVS), 226 to 246 (LFGN…IGFM), and 252 to 272 (FVWA…FMML).

It belongs to the ATPase A chain family. As to quaternary structure, F-type ATPases have 2 components, CF(1) - the catalytic core - and CF(0) - the membrane proton channel. CF(1) has five subunits: alpha(3), beta(3), gamma(1), delta(1), epsilon(1). CF(0) has three main subunits: a(1), b(2) and c(9-12). The alpha and beta chains form an alternating ring which encloses part of the gamma chain. CF(1) is attached to CF(0) by a central stalk formed by the gamma and epsilon chains, while a peripheral stalk is formed by the delta and b chains.

The protein localises to the cell inner membrane. Functionally, key component of the proton channel; it plays a direct role in the translocation of protons across the membrane. In Pseudoalteromonas translucida (strain TAC 125), this protein is ATP synthase subunit a.